Consider the following 160-residue polypeptide: Glyoxalase domain-containing protein 5 (160 aa).

One can recognise a VOC domain in the interval 33-153; that stretch reads RLDHLVLTVR…DHNLIEVSNY (121 aa).

This sequence belongs to the glyoxalase I family.

The protein is Glyoxalase domain-containing protein 5 (glod5) of Xenopus laevis (African clawed frog).